Here is a 650-residue protein sequence, read N- to C-terminus: Acetyl-coenzyme A synthetase (650 aa).

CoA is bound by residues 191-194 (RGGR), Thr-311, and Asn-335. ATP-binding positions include 387–389 (GEP), 411–416 (DTWWQT), Asp-500, and Arg-515. Ser-523 contributes to the CoA binding site. Position 526 (Arg-526) interacts with ATP. Residues Val-537, His-539, and Val-542 each coordinate Mg(2+). Arg-584 contacts CoA. At Lys-609 the chain carries N6-acetyllysine.

This sequence belongs to the ATP-dependent AMP-binding enzyme family. It depends on Mg(2+) as a cofactor. Post-translationally, acetylated. Deacetylation by the SIR2-homolog deacetylase activates the enzyme.

It carries out the reaction acetate + ATP + CoA = acetyl-CoA + AMP + diphosphate. Catalyzes the conversion of acetate into acetyl-CoA (AcCoA), an essential intermediate at the junction of anabolic and catabolic pathways. AcsA undergoes a two-step reaction. In the first half reaction, AcsA combines acetate with ATP to form acetyl-adenylate (AcAMP) intermediate. In the second half reaction, it can then transfer the acetyl group from AcAMP to the sulfhydryl group of CoA, forming the product AcCoA. This Shewanella sp. (strain ANA-3) protein is Acetyl-coenzyme A synthetase.